A 171-amino-acid polypeptide reads, in one-letter code: Mitochondrial import inner membrane translocase subunit Tim17-A (171 aa).

A disulfide bond links C9 and C78. 3 helical membrane passes run 17-37 (CGGA…IKGF), 63-77 (GGSF…SMID), and 113-133 (VGSA…GILL). The disordered stretch occupies residues 144 to 171 (GPQFAEDPSQLPSTQLPSSPFGDYRQYQ). Residues 151 to 163 (PSQLPSTQLPSSP) are compositionally biased toward low complexity.

The protein belongs to the Tim17/Tim22/Tim23 family. As to quaternary structure, component of the TIM23 complex at least composed of TIMM23, TIMM17 (TIMM17A or TIMM17B) and TIMM50. The complex interacts with the TIMM44 component of the PAM complex and with DNAJC15. Post-translationally, degraded by YMEL1 downstream of the integrated stress response (ISR).

It is found in the mitochondrion inner membrane. Functionally, essential component of the TIM23 complex, a complex that mediates the translocation of transit peptide-containing proteins across the mitochondrial inner membrane. The polypeptide is Mitochondrial import inner membrane translocase subunit Tim17-A (TIMM17A) (Homo sapiens (Human)).